Here is a 432-residue protein sequence, read N- to C-terminus: Glutamyl-tRNA reductase (432 aa).

Substrate is bound by residues 55–58 (TCNR), serine 114, 119–121 (ETQ), and glutamine 125. Cysteine 56 functions as the Nucleophile in the catalytic mechanism. NADP(+) is bound at residue 194–199 (GAGEMI).

Belongs to the glutamyl-tRNA reductase family. In terms of assembly, homodimer.

It catalyses the reaction (S)-4-amino-5-oxopentanoate + tRNA(Glu) + NADP(+) = L-glutamyl-tRNA(Glu) + NADPH + H(+). It participates in porphyrin-containing compound metabolism; protoporphyrin-IX biosynthesis; 5-aminolevulinate from L-glutamyl-tRNA(Glu): step 1/2. Its function is as follows. Catalyzes the NADPH-dependent reduction of glutamyl-tRNA(Glu) to glutamate 1-semialdehyde (GSA). This Burkholderia orbicola (strain AU 1054) protein is Glutamyl-tRNA reductase.